The following is a 257-amino-acid chain: Imidazole glycerol phosphate synthase subunit HisF (257 aa).

Catalysis depends on residues Asp11 and Asp130.

Belongs to the HisA/HisF family. Heterodimer of HisH and HisF.

The protein resides in the cytoplasm. The enzyme catalyses 5-[(5-phospho-1-deoxy-D-ribulos-1-ylimino)methylamino]-1-(5-phospho-beta-D-ribosyl)imidazole-4-carboxamide + L-glutamine = D-erythro-1-(imidazol-4-yl)glycerol 3-phosphate + 5-amino-1-(5-phospho-beta-D-ribosyl)imidazole-4-carboxamide + L-glutamate + H(+). It participates in amino-acid biosynthesis; L-histidine biosynthesis; L-histidine from 5-phospho-alpha-D-ribose 1-diphosphate: step 5/9. In terms of biological role, IGPS catalyzes the conversion of PRFAR and glutamine to IGP, AICAR and glutamate. The HisF subunit catalyzes the cyclization activity that produces IGP and AICAR from PRFAR using the ammonia provided by the HisH subunit. This is Imidazole glycerol phosphate synthase subunit HisF from Aliivibrio fischeri (strain MJ11) (Vibrio fischeri).